We begin with the raw amino-acid sequence, 314 residues long: 4-hydroxy-3-methylbut-2-enyl diphosphate reductase (314 aa).

C12 is a binding site for [4Fe-4S] cluster. H41 and H74 together coordinate (2E)-4-hydroxy-3-methylbut-2-enyl diphosphate. Dimethylallyl diphosphate is bound by residues H41 and H74. Residues H41 and H74 each contribute to the isopentenyl diphosphate site. C96 contributes to the [4Fe-4S] cluster binding site. Position 124 (H124) interacts with (2E)-4-hydroxy-3-methylbut-2-enyl diphosphate. H124 is a binding site for dimethylallyl diphosphate. Isopentenyl diphosphate is bound at residue H124. Residue E126 is the Proton donor of the active site. (2E)-4-hydroxy-3-methylbut-2-enyl diphosphate is bound at residue T167. [4Fe-4S] cluster is bound at residue C197. (2E)-4-hydroxy-3-methylbut-2-enyl diphosphate-binding residues include S225, S226, N227, and S269. Positions 225, 226, 227, and 269 each coordinate dimethylallyl diphosphate. S225, S226, N227, and S269 together coordinate isopentenyl diphosphate.

It belongs to the IspH family. It depends on [4Fe-4S] cluster as a cofactor.

It carries out the reaction isopentenyl diphosphate + 2 oxidized [2Fe-2S]-[ferredoxin] + H2O = (2E)-4-hydroxy-3-methylbut-2-enyl diphosphate + 2 reduced [2Fe-2S]-[ferredoxin] + 2 H(+). The catalysed reaction is dimethylallyl diphosphate + 2 oxidized [2Fe-2S]-[ferredoxin] + H2O = (2E)-4-hydroxy-3-methylbut-2-enyl diphosphate + 2 reduced [2Fe-2S]-[ferredoxin] + 2 H(+). Its pathway is isoprenoid biosynthesis; dimethylallyl diphosphate biosynthesis; dimethylallyl diphosphate from (2E)-4-hydroxy-3-methylbutenyl diphosphate: step 1/1. It functions in the pathway isoprenoid biosynthesis; isopentenyl diphosphate biosynthesis via DXP pathway; isopentenyl diphosphate from 1-deoxy-D-xylulose 5-phosphate: step 6/6. In terms of biological role, catalyzes the conversion of 1-hydroxy-2-methyl-2-(E)-butenyl 4-diphosphate (HMBPP) into a mixture of isopentenyl diphosphate (IPP) and dimethylallyl diphosphate (DMAPP). Acts in the terminal step of the DOXP/MEP pathway for isoprenoid precursor biosynthesis. The protein is 4-hydroxy-3-methylbut-2-enyl diphosphate reductase of Haemophilus ducreyi (strain 35000HP / ATCC 700724).